Here is a 144-residue protein sequence, read N- to C-terminus: Large ribosomal subunit protein uL16 (144 aa).

This sequence belongs to the universal ribosomal protein uL16 family. As to quaternary structure, part of the 50S ribosomal subunit.

Binds 23S rRNA and is also seen to make contacts with the A and possibly P site tRNAs. The polypeptide is Large ribosomal subunit protein uL16 (Halothermothrix orenii (strain H 168 / OCM 544 / DSM 9562)).